A 500-amino-acid chain; its full sequence is Cytochrome P450 11B1, mitochondrial (500 aa).

The transit peptide at 1–24 directs the protein to the mitochondrion; that stretch reads MAFRLKSDVRLAGSWLCLRGARAL. Cys447 is a heme binding site.

The protein belongs to the cytochrome P450 family. It depends on heme as a cofactor.

Its subcellular location is the mitochondrion inner membrane. It carries out the reaction a steroid + 2 reduced [adrenodoxin] + O2 + 2 H(+) = an 11beta-hydroxysteroid + 2 oxidized [adrenodoxin] + H2O. The enzyme catalyses 11-deoxycortisol + 2 reduced [adrenodoxin] + O2 + 2 H(+) = cortisol + 2 oxidized [adrenodoxin] + H2O. It catalyses the reaction 21-hydroxyprogesterone + 2 reduced [adrenodoxin] + O2 + 2 H(+) = corticosterone + 2 oxidized [adrenodoxin] + H2O. The catalysed reaction is 21-hydroxyprogesterone + 2 reduced [adrenodoxin] + O2 + 2 H(+) = 18-hydroxy-11-deoxycorticosterone + 2 oxidized [adrenodoxin] + H2O. It carries out the reaction 21-hydroxyprogesterone + 2 reduced [adrenodoxin] + O2 + 2 H(+) = 19-hydroxy-11-deoxycorticosterone + 2 oxidized [adrenodoxin] + H2O. The enzyme catalyses cortisol + 2 reduced [adrenodoxin] + O2 + 2 H(+) = 18-hydroxycortisol + 2 oxidized [adrenodoxin] + H2O. It catalyses the reaction 11-deoxycortisol + 2 reduced [adrenodoxin] + O2 + 2 H(+) = 18-hydroxy-11-deoxycortisol + 2 oxidized [adrenodoxin] + H2O. Its pathway is steroid biosynthesis; glucocorticoid biosynthesis. The protein operates within steroid hormone biosynthesis. In terms of biological role, a cytochrome P450 monooxygenase involved in the biosynthesis of adrenal corticoids. Catalyzes a variety of reactions that are essential for many species, including detoxification, defense, and the formation of endogenous chemicals like steroid hormones. Steroid 11beta, 18- and 19-hydroxylase with preferred regioselectivity at 11beta, then 18, and lastly 19. Catalyzes the hydroxylation of 11-deoxycortisol and 11-deoxycorticosterone (21-hydroxyprogesterone) at 11beta position, yielding cortisol or corticosterone, respectively, but cannot produce aldosterone. Mechanistically, uses molecular oxygen inserting one oxygen atom into a substrate for hydroxylation and reducing the second into a water molecule. Two electrons are provided by NADPH via a two-protein mitochondrial transfer system comprising flavoprotein FDXR (adrenodoxin/ferredoxin reductase) and nonheme iron-sulfur protein FDX1 or FDX2 (adrenodoxin/ferredoxin). Due to its lack of 18-oxidation activity, it is incapable of generating aldosterone. Could also be involved in the androgen metabolic pathway. The sequence is that of Cytochrome P450 11B1, mitochondrial (CYP11B1) from Cavia porcellus (Guinea pig).